The primary structure comprises 63 residues: MAWKVSVDVDTCIGDAICASLCPDVFEMGDDGKAHPVVETTDLDCAQEAAEACPVGAITLEEA.

Residues 3–31 (WKVSVDVDTCIGDAICASLCPDVFEMGDD) enclose the 4Fe-4S ferredoxin-type domain. Positions 12, 15, and 18 each coordinate [4Fe-4S] cluster. An intrachain disulfide couples Cys22 to Cys45. [4Fe-4S] cluster is bound at residue Cys53.

It depends on [4Fe-4S] cluster as a cofactor. [3Fe-4S] cluster serves as cofactor.

Ferredoxins are iron-sulfur proteins that transfer electrons in a wide variety of metabolic reactions. In Thermococcus kodakarensis (strain ATCC BAA-918 / JCM 12380 / KOD1) (Pyrococcus kodakaraensis (strain KOD1)), this protein is Ferredoxin (fdxA).